The chain runs to 406 residues: Phosphopentomutase (406 aa).

Asp-10, Asp-305, His-310, Asp-346, His-347, and His-358 together coordinate Mn(2+).

The protein belongs to the phosphopentomutase family. Mn(2+) is required as a cofactor.

The protein resides in the cytoplasm. The enzyme catalyses 2-deoxy-alpha-D-ribose 1-phosphate = 2-deoxy-D-ribose 5-phosphate. It catalyses the reaction alpha-D-ribose 1-phosphate = D-ribose 5-phosphate. Its pathway is carbohydrate degradation; 2-deoxy-D-ribose 1-phosphate degradation; D-glyceraldehyde 3-phosphate and acetaldehyde from 2-deoxy-alpha-D-ribose 1-phosphate: step 1/2. Its function is as follows. Isomerase that catalyzes the conversion of deoxy-ribose 1-phosphate (dRib-1-P) and ribose 1-phosphate (Rib-1-P) to deoxy-ribose 5-phosphate (dRib-5-P) and ribose 5-phosphate (Rib-5-P), respectively. This Vibrio vulnificus (strain CMCP6) protein is Phosphopentomutase.